Consider the following 120-residue polypeptide: Large ribosomal subunit protein uL18 (120 aa).

It belongs to the universal ribosomal protein uL18 family. In terms of assembly, part of the 50S ribosomal subunit; part of the 5S rRNA/L5/L18/L25 subcomplex. Contacts the 5S and 23S rRNAs.

In terms of biological role, this is one of the proteins that bind and probably mediate the attachment of the 5S RNA into the large ribosomal subunit, where it forms part of the central protuberance. The sequence is that of Large ribosomal subunit protein uL18 from Clostridium novyi (strain NT).